The sequence spans 323 residues: Voltage-dependent calcium channel gamma-2 subunit (323 aa).

A helical transmembrane segment spans residues 10–30 (MLLTTVGAFAAFSLMTIAVGT). Asn48 carries N-linked (GlcNAc...) asparagine glycosylation. The next 3 membrane-spanning stretches (helical) occupy residues 104 to 124 (SSIFPILSVILLFMGGLCIAA), 134 to 154 (IILSAGIFFVSAGLSNIIGII), and 182 to 202 (FGALSFIIAEMVGVLAVHMFI). Positions 233–261 (YQRRSRSSSRSTEPSHSRDASPVGIKGFN) are disordered. A Phosphoserine modification is found at Ser253. A Phosphotyrosine modification is found at Tyr271. Thr321 is subject to Phosphothreonine.

The protein belongs to the PMP-22/EMP/MP20 family. CACNG subfamily. In terms of assembly, the L-type calcium channel is composed of five subunits: alpha-1, alpha-2/delta, beta and gamma. Interacts with the PDZ domains of DLG4/PSD-95 and DLG1/SAP97. May interact with GOPC. Acts as an auxiliary subunit for AMPA-selective glutamate receptors (AMPARs). Found in a complex with GRIA1, GRIA2, GRIA3, GRIA4, CNIH2, CNIH3, CACNG3, CACNG4, CACNG5, CACNG7 and CACNG8. Interacts with GRIA1 and GRIA2. Interacts with MPP2. Post-translationally, phosphorylation of Thr-321 impairs interaction with DLG1 and DLG4. As to expression, brain.

Its subcellular location is the membrane. The protein resides in the synapse. It localises to the synaptosome. Its function is as follows. Regulates the trafficking and gating properties of AMPA-selective glutamate receptors (AMPARs). Promotes their targeting to the cell membrane and synapses and modulates their gating properties by slowing their rates of activation, deactivation and desensitization. Does not show subunit-specific AMPA receptor regulation and regulates all AMPAR subunits. Thought to stabilize the calcium channel in an inactivated (closed) state. This chain is Voltage-dependent calcium channel gamma-2 subunit (CACNG2), found in Homo sapiens (Human).